We begin with the raw amino-acid sequence, 341 residues long: tRNA N6-adenosine threonylcarbamoyltransferase (341 aa).

His-111 and His-115 together coordinate Fe cation. Substrate is bound by residues 134-138, Asp-167, Gly-180, and Asn-276; that span reads LVSGG. Asp-304 provides a ligand contact to Fe cation.

The protein belongs to the KAE1 / TsaD family. Requires Fe(2+) as cofactor.

The protein localises to the cytoplasm. It catalyses the reaction L-threonylcarbamoyladenylate + adenosine(37) in tRNA = N(6)-L-threonylcarbamoyladenosine(37) in tRNA + AMP + H(+). Its function is as follows. Required for the formation of a threonylcarbamoyl group on adenosine at position 37 (t(6)A37) in tRNAs that read codons beginning with adenine. Is involved in the transfer of the threonylcarbamoyl moiety of threonylcarbamoyl-AMP (TC-AMP) to the N6 group of A37, together with TsaE and TsaB. TsaD likely plays a direct catalytic role in this reaction. The chain is tRNA N6-adenosine threonylcarbamoyltransferase from Pseudomonas paraeruginosa (strain DSM 24068 / PA7) (Pseudomonas aeruginosa (strain PA7)).